A 551-amino-acid chain; its full sequence is Membrane protein insertase YidC (551 aa).

Residues 3–23 traverse the membrane as a helical segment; that stretch reads ANHIRILLLVTIAIMFISLMG. Positions 33-47 are enriched in polar residues; it reads NTKQQTSATQNNSHY. Residues 33 to 58 are disordered; it reads NTKQQTSATQNNSHYDNADSSTNTDV. The next 3 membrane-spanning stretches (helical) occupy residues 361–381, 431–451, and 504–524; these read LVGN…LIFY, LSGC…YWVL, and VMMF…SGLV.

This sequence belongs to the OXA1/ALB3/YidC family. Type 1 subfamily. As to quaternary structure, interacts with the Sec translocase complex via SecD. Specifically interacts with transmembrane segments of nascent integral membrane proteins during membrane integration.

The protein resides in the cell inner membrane. In terms of biological role, required for the insertion and/or proper folding and/or complex formation of integral membrane proteins into the membrane. Involved in integration of membrane proteins that insert both dependently and independently of the Sec translocase complex, as well as at least some lipoproteins. Aids folding of multispanning membrane proteins. The protein is Membrane protein insertase YidC of Francisella tularensis subsp. novicida (strain U112).